An 83-amino-acid chain; its full sequence is Large ribosomal subunit protein eL31 (83 aa).

Belongs to the eukaryotic ribosomal protein eL31 family.

The protein is Large ribosomal subunit protein eL31 of Methanococcus vannielii (strain ATCC 35089 / DSM 1224 / JCM 13029 / OCM 148 / SB).